A 155-amino-acid chain; its full sequence is SsrA-binding protein (155 aa).

Belongs to the SmpB family.

The protein localises to the cytoplasm. Required for rescue of stalled ribosomes mediated by trans-translation. Binds to transfer-messenger RNA (tmRNA), required for stable association of tmRNA with ribosomes. tmRNA and SmpB together mimic tRNA shape, replacing the anticodon stem-loop with SmpB. tmRNA is encoded by the ssrA gene; the 2 termini fold to resemble tRNA(Ala) and it encodes a 'tag peptide', a short internal open reading frame. During trans-translation Ala-aminoacylated tmRNA acts like a tRNA, entering the A-site of stalled ribosomes, displacing the stalled mRNA. The ribosome then switches to translate the ORF on the tmRNA; the nascent peptide is terminated with the 'tag peptide' encoded by the tmRNA and targeted for degradation. The ribosome is freed to recommence translation, which seems to be the essential function of trans-translation. The chain is SsrA-binding protein from Chelativorans sp. (strain BNC1).